Here is a 362-residue protein sequence, read N- to C-terminus: Cobalt-precorrin-5B C(1)-methyltransferase (362 aa).

Belongs to the CbiD family.

It catalyses the reaction Co-precorrin-5B + S-adenosyl-L-methionine = Co-precorrin-6A + S-adenosyl-L-homocysteine. The protein operates within cofactor biosynthesis; adenosylcobalamin biosynthesis; cob(II)yrinate a,c-diamide from sirohydrochlorin (anaerobic route): step 6/10. Its function is as follows. Catalyzes the methylation of C-1 in cobalt-precorrin-5B to form cobalt-precorrin-6A. The chain is Cobalt-precorrin-5B C(1)-methyltransferase from Geobacter sulfurreducens (strain ATCC 51573 / DSM 12127 / PCA).